Consider the following 314-residue polypeptide: Hydrolase 4 (314 aa).

The Involved in the stabilization of the negatively charged intermediate by the formation of the oxyanion hole motif lies at 73 to 75; the sequence is HGA. Residues Ser-165 and Asp-260 contribute to the active site.

This sequence belongs to the 'GDXG' lipolytic enzyme family.

Its pathway is alkaloid biosynthesis. Its function is as follows. Component of the seco-iridoid and derivatives monoterpenoid indole alkaloids (MIAs, e.g. vincadifformine) biosynthesis pathway. Catalyzes the conversion of O-acetylstemmadenine (OAS) to vincadifformine. May also trigger the formation of additional unknown MIAs. The sequence is that of Hydrolase 4 from Catharanthus roseus (Madagascar periwinkle).